A 185-amino-acid polypeptide reads, in one-letter code: Ribosome-recycling factor (185 aa).

It belongs to the RRF family.

Its subcellular location is the cytoplasm. Functionally, responsible for the release of ribosomes from messenger RNA at the termination of protein biosynthesis. May increase the efficiency of translation by recycling ribosomes from one round of translation to another. In Ectopseudomonas mendocina (strain ymp) (Pseudomonas mendocina), this protein is Ribosome-recycling factor.